Consider the following 131-residue polypeptide: Putative pre-16S rRNA nuclease (131 aa).

Belongs to the YqgF nuclease family.

The protein localises to the cytoplasm. Functionally, could be a nuclease involved in processing of the 5'-end of pre-16S rRNA. In Bordetella petrii (strain ATCC BAA-461 / DSM 12804 / CCUG 43448), this protein is Putative pre-16S rRNA nuclease.